The following is a 350-amino-acid chain: Uroporphyrinogen decarboxylase (350 aa).

Residues Arg-27–Arg-31, Phe-46, Asp-76, Tyr-152, Ser-207, and His-321 each bind substrate.

The protein belongs to the uroporphyrinogen decarboxylase family. As to quaternary structure, homodimer.

Its subcellular location is the cytoplasm. It catalyses the reaction uroporphyrinogen III + 4 H(+) = coproporphyrinogen III + 4 CO2. It functions in the pathway porphyrin-containing compound metabolism; protoporphyrin-IX biosynthesis; coproporphyrinogen-III from 5-aminolevulinate: step 4/4. Its function is as follows. Catalyzes the decarboxylation of four acetate groups of uroporphyrinogen-III to yield coproporphyrinogen-III. The polypeptide is Uroporphyrinogen decarboxylase (Listeria monocytogenes serotype 4a (strain HCC23)).